Here is a 214-residue protein sequence, read N- to C-terminus: uncharacterized protein (214 aa).

The signal sequence occupies residues 1–17 (MLKKIIILFLGVFVLSG). Cysteine 18 carries N-palmitoyl cysteine lipidation. Residue cysteine 18 is the site of S-diacylglycerol cysteine attachment. Over residues 64–77 (DNLDDPEDDDDDYD) the composition is skewed to acidic residues. Disordered stretches follow at residues 64–83 (DNLD…LRGE), 106–138 (YKAE…KERK), and 166–197 (TANQ…SKVK). Residues 120–162 (TLSKANKKVRKDNTDKERKMQEELDQIKAMLRETKRDISKYTC) are a coiled coil.

It localises to the cell membrane. This is an uncharacterized protein from Rickettsia bellii (strain RML369-C).